The primary structure comprises 399 residues: Phosphoglycerate kinase (399 aa).

Substrate contacts are provided by residues 21-23 (DFN), R37, 60-63 (HLGR), R119, and R152. ATP contacts are provided by residues K205, G296, E327, and 353 to 356 (GGDT).

It belongs to the phosphoglycerate kinase family. As to quaternary structure, monomer.

It localises to the cytoplasm. It carries out the reaction (2R)-3-phosphoglycerate + ATP = (2R)-3-phospho-glyceroyl phosphate + ADP. It functions in the pathway carbohydrate degradation; glycolysis; pyruvate from D-glyceraldehyde 3-phosphate: step 2/5. The protein is Phosphoglycerate kinase of Sulfurimonas denitrificans (strain ATCC 33889 / DSM 1251) (Thiomicrospira denitrificans (strain ATCC 33889 / DSM 1251)).